The primary structure comprises 166 residues: MANNDQKRDEGYIEKLVQVNRVAKTVKGGRIFTFTALTVVGDGKGRVGFGRGKSREVPAAIQKAMEAARRNMIQVDLKGTTLQYATKAAHGASKVYMQPASEGTGIIAGGAMRAVLEVAGVQNVLAKCYGSTNPVNVVHATFKGLKAMQSPESIAAKRGKTVEEIF.

In terms of domain architecture, S5 DRBM spans 12-75 (YIEKLVQVNR…EAARRNMIQV (64 aa)).

The protein belongs to the universal ribosomal protein uS5 family. Part of the 30S ribosomal subunit. Contacts proteins S4 and S8.

Functionally, with S4 and S12 plays an important role in translational accuracy. In terms of biological role, located at the back of the 30S subunit body where it stabilizes the conformation of the head with respect to the body. The chain is Small ribosomal subunit protein uS5 from Pseudomonas entomophila (strain L48).